Here is a 460-residue protein sequence, read N- to C-terminus: MLNPGQTIAAIATAIVPQQGSIAIVRLSGSEAVAIAQRLFIAPGQQVWESHRILYGYVCNPRTGQRVDEALLLLMLAPRSYTKEDVVEFHCHGGMIAVQQVLQLCLEAGAVLAQPGEFTLRAFLHGRLDLTQAESVADLVGAKSPQAAQAALAGLQGKLIQPLQQLRRTCIDILAEIEARIDFEEDLPPLDLNQISSQIQHSLTEVNRILATADRGELLRTGLKVAIVGRPNVGKSSLLNAWSRSDRAIVTELPGTTRDVVESYLVVGGIPVQVLDTAGIRETSDQVEQIGVERSHKAAQAADLVLLVIDAQTGWTAEDQAIYTQVQERSLILVINKIDLVDQAFQPQACLPDPALTYLCTAAAQNQGIEDLESAILSKVQGGELEGANLDWAINQRQAAALTRAKLSLENVQETIANQLPLDFWTIDLREAIRALGEITGEEVTESVLDQIFSRFCIGK.

(6S)-5-formyl-5,6,7,8-tetrahydrofolate is bound by residues arginine 26, glutamate 88, and arginine 127. Positions glycine 222–glutamine 381 constitute a TrmE-type G domain. Asparagine 232 lines the K(+) pocket. Residues asparagine 232–serine 237, threonine 251–threonine 257, and aspartate 276–glycine 279 contribute to the GTP site. Residue serine 236 participates in Mg(2+) binding. Threonine 251, leucine 253, and threonine 256 together coordinate K(+). Threonine 257 lines the Mg(2+) pocket. (6S)-5-formyl-5,6,7,8-tetrahydrofolate is bound at residue lysine 460.

Belongs to the TRAFAC class TrmE-Era-EngA-EngB-Septin-like GTPase superfamily. TrmE GTPase family. Homodimer. Heterotetramer of two MnmE and two MnmG subunits. The cofactor is K(+).

The protein localises to the cytoplasm. In terms of biological role, exhibits a very high intrinsic GTPase hydrolysis rate. Involved in the addition of a carboxymethylaminomethyl (cmnm) group at the wobble position (U34) of certain tRNAs, forming tRNA-cmnm(5)s(2)U34. The chain is tRNA modification GTPase MnmE from Cyanothece sp. (strain PCC 7425 / ATCC 29141).